Reading from the N-terminus, the 595-residue chain is Polyadenylate-binding protein-interacting protein 4 (595 aa).

The Sm domain occupies 48-113 (RLVYFTTCKI…SRSEFVRKPP (66 aa)). 2 stretches are compositionally biased toward polar residues: residues 302–313 (GGSSTSDGQKPA) and 326–346 (GDSQSSRKNKNVDQSCSTSKQ). Disordered stretches follow at residues 302 to 505 (GGSS…FYYP) and 536 to 595 (MYHP…KGRE). Basic and acidic residues predominate over residues 364 to 382 (DEQRRKNNEEVSHNNRSAE). The span at 416-465 (SQVSSKTKSESSFGQSASRSSESRPGPSTSSRPGLSPSSSIGSMASSEKS) shows a compositional bias: low complexity. The PAM2-like 1; degenerate motif lies at 466-474 (TLNPNAKEF). Residues 475 to 485 (KLNPKAKSFKP) carry the PAM2-like 2 motif. 2 stretches are compositionally biased toward low complexity: residues 488 to 501 (SAAAPPQSPIADAS) and 548 to 570 (QPQYPQQQMIPGQQQQQMIPGQQ).

As to expression, expressed in cauline leaves, stems, rosette leaves, immature siliques and primary inflorescences.

In Arabidopsis thaliana (Mouse-ear cress), this protein is Polyadenylate-binding protein-interacting protein 4 (CID4).